A 92-amino-acid polypeptide reads, in one-letter code: Small ribosomal subunit protein uS19 (92 aa).

This sequence belongs to the universal ribosomal protein uS19 family.

Functionally, protein S19 forms a complex with S13 that binds strongly to the 16S ribosomal RNA. In Phenylobacterium zucineum (strain HLK1), this protein is Small ribosomal subunit protein uS19.